A 575-amino-acid chain; its full sequence is Homocysteine/cysteine synthase (575 aa).

Position 376 is an N6-(pyridoxal phosphate)lysine (Lys376).

The protein belongs to the trans-sulfuration enzymes family. MET7 subfamily. It depends on pyridoxal 5'-phosphate as a cofactor.

It is found in the cytoplasm. It carries out the reaction O-acetyl-L-homoserine + methanethiol = L-methionine + acetate + H(+). It catalyses the reaction O-acetyl-L-homoserine + hydrogen sulfide = L-homocysteine + acetate. The catalysed reaction is O-acetyl-L-serine + hydrogen sulfide = L-cysteine + acetate. It functions in the pathway amino-acid biosynthesis; L-methionine biosynthesis via de novo pathway; L-homocysteine from O-acetyl-L-homoserine. Plays a role in inorganic sulfur assimilation during sulfur-limited conditions; catalyzes the conversion of O-acetyl-L-homoserine (OAH) into homocysteine in the methionine biosynthesis pathway. Also catalyzes the conversion of O-acetylserine (OAS) into cysteine, the last step in the cysteine biosynthesis pathway. However, it seems that in S.cerevisiae cysteine biosynthesis occurs exclusively through the cystathionine pathway and not via direct incorporation of sulfur into OAS. It therefore has no metabolic role in cysteine biosynthesis and may only have a regulatory role controlling OAS levels. The chain is Homocysteine/cysteine synthase from Saccharomyces cerevisiae (strain ATCC 204508 / S288c) (Baker's yeast).